Reading from the N-terminus, the 341-residue chain is Protein FAM50A (341 aa).

Disordered stretches follow at residues 1 to 27 (MAQYKGAASEAGRAMQLMKKREREREQ) and 80 to 147 (LVKE…EIEE). Residues 80 to 115 (LVKEREKQLAKKEQSKELQLKLEKQKEKKRKEEQKR) show a composition bias toward basic and acidic residues. The span at 125 to 147 (DEGEDEEEEEEEEEEEEEDEIEE) shows a compositional bias: acidic residues.

The protein belongs to the FAM50 family.

It localises to the nucleus. Functionally, probably involved in the regulation of pre-mRNA splicing. This chain is Protein FAM50A (fam50a), found in Danio rerio (Zebrafish).